A 63-amino-acid polypeptide reads, in one-letter code: Small ribosomal subunit protein eS31 (63 aa).

Residues C31, C34, C50, and C53 each contribute to the Zn(2+) site.

The protein belongs to the eukaryotic ribosomal protein eS31 family. In terms of assembly, part of the 30S ribosomal subunit. Zn(2+) is required as a cofactor.

This Aeropyrum pernix (strain ATCC 700893 / DSM 11879 / JCM 9820 / NBRC 100138 / K1) protein is Small ribosomal subunit protein eS31 (rps27ae).